Here is a 531-residue protein sequence, read N- to C-terminus: CTP synthase (531 aa).

The tract at residues 1 to 267 is amidoligase domain; that stretch reads MTKYIFVTGG…DQIVCEHLRL (267 aa). Ser13 is a binding site for CTP. Ser13 contributes to the UTP binding site. 14 to 19 contributes to the ATP binding site; that stretch reads SLGKGI. Tyr54 provides a ligand contact to L-glutamine. An ATP-binding site is contributed by Asp71. Asp71 and Glu141 together coordinate Mg(2+). CTP is bound by residues 148 to 150, 188 to 193, and Lys224; these read DIE and KTKPTQ. Residues 188–193 and Lys224 contribute to the UTP site; that span reads KTKPTQ. 240–242 provides a ligand contact to ATP; it reads RDA. Positions 292 to 531 constitute a Glutamine amidotransferase type-1 domain; the sequence is KIALVGKYVE…REFVRASLKE (240 aa). Gly354 is a binding site for L-glutamine. Cys381 acts as the Nucleophile; for glutamine hydrolysis in catalysis. L-glutamine-binding positions include 382 to 385, Glu405, and Arg462; that span reads LGMQ. Residues His507 and Glu509 contribute to the active site.

Belongs to the CTP synthase family. Homotetramer.

It catalyses the reaction UTP + L-glutamine + ATP + H2O = CTP + L-glutamate + ADP + phosphate + 2 H(+). The catalysed reaction is L-glutamine + H2O = L-glutamate + NH4(+). The enzyme catalyses UTP + NH4(+) + ATP = CTP + ADP + phosphate + 2 H(+). It functions in the pathway pyrimidine metabolism; CTP biosynthesis via de novo pathway; CTP from UDP: step 2/2. Allosterically activated by GTP, when glutamine is the substrate; GTP has no effect on the reaction when ammonia is the substrate. The allosteric effector GTP functions by stabilizing the protein conformation that binds the tetrahedral intermediate(s) formed during glutamine hydrolysis. Inhibited by the product CTP, via allosteric rather than competitive inhibition. Catalyzes the ATP-dependent amination of UTP to CTP with either L-glutamine or ammonia as the source of nitrogen. Regulates intracellular CTP levels through interactions with the four ribonucleotide triphosphates. This is CTP synthase from Geobacillus kaustophilus (strain HTA426).